We begin with the raw amino-acid sequence, 525 residues long: uncharacterized protein (525 aa).

Residues 1–21 (MLECLSALLVLFAGGGGSVLA) form the signal peptide. At 22–448 (AVQSKTVADP…ISAASQLDER (427 aa)) the chain is on the extracellular side. Residues 242 to 264 (KVSSENCSKDTDDKSGSKKERNT) form a disordered region. A helical transmembrane segment spans residues 449-469 (IFIFTAITVSITTLMMLGFSY). Residues 470 to 525 (RSRVSFRDHSIDDSDDDNDWSDDEVEFDEEYFYSLPVSIPEKGISLDKMAQQLGVE) are Cytoplasmic-facing.

The protein localises to the membrane. This is an uncharacterized protein from Saccharomyces cerevisiae (strain RM11-1a) (Baker's yeast).